A 38-amino-acid polypeptide reads, in one-letter code: Photosystem II reaction center protein M (38 aa).

Residues 7-27 (GFVASILFVLVPTVFLLILYI) form a helical membrane-spanning segment.

It belongs to the PsbM family. As to quaternary structure, PSII is composed of 1 copy each of membrane proteins PsbA, PsbB, PsbC, PsbD, PsbE, PsbF, PsbH, PsbI, PsbJ, PsbK, PsbL, PsbM, PsbT, PsbX, PsbY, PsbZ, Psb30/Ycf12, peripheral proteins PsbO, CyanoQ (PsbQ), PsbU, PsbV and a large number of cofactors. It forms dimeric complexes.

The protein localises to the cellular thylakoid membrane. In terms of biological role, one of the components of the core complex of photosystem II (PSII). PSII is a light-driven water:plastoquinone oxidoreductase that uses light energy to abstract electrons from H(2)O, generating O(2) and a proton gradient subsequently used for ATP formation. It consists of a core antenna complex that captures photons, and an electron transfer chain that converts photonic excitation into a charge separation. This subunit is found at the monomer-monomer interface. The chain is Photosystem II reaction center protein M from Nostoc punctiforme (strain ATCC 29133 / PCC 73102).